The chain runs to 186 residues: Lipid A palmitoyltransferase PagP (186 aa).

The N-terminal stretch at 1–25 (MNVSKYVAIFSFVFIQLISVGKVFA) is a signal peptide. Catalysis depends on residues histidine 58, aspartate 101, and serine 102.

It belongs to the lipid A palmitoyltransferase family. Homodimer.

It localises to the cell outer membrane. It catalyses the reaction lipid A (E. coli) + a 1-hexadecanoyl-2-acyl-sn-glycero-3-phosphocholine = hepta-acyl lipid A (E. coli) + a 2-acyl-sn-glycero-3-phosphocholine. It carries out the reaction lipid IIA + a 1-hexadecanoyl-2-acyl-sn-glycero-3-phosphocholine = lipid IIB + a 2-acyl-sn-glycero-3-phosphocholine. The enzyme catalyses lipid IVA (E. coli) + a 1-hexadecanoyl-2-acyl-sn-glycero-3-phosphocholine = lipid IVB (E. coli) + a 2-acyl-sn-glycero-3-phosphocholine. Functionally, transfers a palmitate residue from the sn-1 position of a phospholipid to the N-linked hydroxymyristate on the proximal unit of lipid A or its precursors. This chain is Lipid A palmitoyltransferase PagP, found in Escherichia coli (strain ATCC 55124 / KO11FL).